The following is a 226-amino-acid chain: Isoprenyl transferase (226 aa).

Aspartate 12 is a catalytic residue. Aspartate 12 contributes to the Mg(2+) binding site. Residues 13–16 (GNAR), tryptophan 17, lysine 25, histidine 29, and 57–59 (SSE) contribute to the substrate site. The active-site Proton acceptor is the asparagine 60. Residues tryptophan 61, arginine 63, arginine 174, and 180-182 (RIS) contribute to the substrate site. Glutamate 193 is a Mg(2+) binding site.

Belongs to the UPP synthase family. Homodimer. It depends on Mg(2+) as a cofactor.

Catalyzes the condensation of isopentenyl diphosphate (IPP) with allylic pyrophosphates generating different type of terpenoids. In Rickettsia bellii (strain RML369-C), this protein is Isoprenyl transferase.